A 123-amino-acid polypeptide reads, in one-letter code: UPF0102 protein Pcar_2217 (123 aa).

The protein belongs to the UPF0102 family.

The polypeptide is UPF0102 protein Pcar_2217 (Syntrophotalea carbinolica (strain DSM 2380 / NBRC 103641 / GraBd1) (Pelobacter carbinolicus)).